The chain runs to 425 residues: Serine/threonine transporter SstT (425 aa).

The next 9 helical transmembrane spans lie at Phe11 to Ala31, Phe43 to Leu63, Leu91 to Val111, Ala141 to Leu161, Ile182 to Ile202, Leu216 to Val236, Ile290 to Leu310, Leu316 to Ala336, and Val363 to Thr383.

The protein belongs to the dicarboxylate/amino acid:cation symporter (DAACS) (TC 2.A.23) family.

The protein localises to the cell inner membrane. It carries out the reaction L-serine(in) + Na(+)(in) = L-serine(out) + Na(+)(out). The catalysed reaction is L-threonine(in) + Na(+)(in) = L-threonine(out) + Na(+)(out). Its function is as follows. Involved in the import of serine and threonine into the cell, with the concomitant import of sodium (symport system). The chain is Serine/threonine transporter SstT from Psychromonas ingrahamii (strain DSM 17664 / CCUG 51855 / 37).